We begin with the raw amino-acid sequence, 749 residues long: MEAETGSTMETGKGTNRGIRIALALFIGGTLVLGTLLFLVSQGLLSFQAKQEYCLKPECIEAAAAIMSKVNLSVDPCENFFRFACDGWISNNPIPEDMPSYGVYPWLRHNVDLKLKALLEKSVSRRRDTEAVQKAKILYSSCMNEKAIEKADAKPLLHILRHSPFRWPVLEANIGPEGVWSERKFSLLQTLATFRGQYSNSVFIRLYVSPDDKASNEHILKLDQATLSLAVREDFLDNTTEAKSYRDALYKFMVDTAVLLGANSSRAEHDMKSVLRLEIKIAEIMIPHENRTSEAMYNKMNISELSAMIPQFDWLGYIKKVIDTRLYPHLKDIGPSENVVVRVPQYFKDLFRILGAERKKTIANYLVWRMVYSRIPNLSRRFQYRWLEFSRVIQGTTTLLPQWDKCVNFIESALPYVVGKMFVNVHFQEDKKEMMEELIEGVRWAFIDMLEKENEWMDAGTKRKAQEKARAVLAKVGYPEFIMNDTYVNEDLKAIKFSESDYFGNVLQTRKYLAQSDFFWLRKAVPKTEWFTNPTTVNAFYSASTNQIRFPAGELQKPFFWGTEYPRSLSYGAIGVIVGHEFTHGFDNNGRKYDKNGNLDPWWSVESEEKFKEKTKCMINQYSNYYWKKAGLNVKGKRTLGENIADNGGLREAFRAYRKWINDRRQGVEEPLLPGITFTNNQLFFLSYAHVRCNSYRPEAAREQVQIGAHSPPQFRVNGAISNFEEFQKAFNCPRNSTMNRGADSCRLW.

The Cytoplasmic portion of the chain corresponds to 1-20 (MEAETGSTMETGKGTNRGIR). A helical; Signal-anchor for type II membrane protein transmembrane segment spans residues 21–37 (IALALFIGGTLVLGTLL). Over 38 to 749 (FLVSQGLLSF…NRGADSCRLW (712 aa)) the chain is Extracellular. The 697-residue stretch at 53–749 (YCLKPECIEA…NRGADSCRLW (697 aa)) folds into the Peptidase M13 domain. An intrachain disulfide couples Cys54 to Cys59. N-linked (GlcNAc...) asparagine glycans are attached at residues Asn71, Asn238, Asn263, Asn290, Asn301, Asn377, and Asn484. 4 disulfides stabilise this stretch: Cys77–Cys733, Cys85–Cys693, Cys142–Cys406, and Cys617–Cys746. His580 contributes to the Zn(2+) binding site. Glu581 is an active-site residue. The Zn(2+) site is built by His584 and Glu642. Asp646 (proton donor) is an active-site residue. The N-linked (GlcNAc...) asparagine glycan is linked to Asn736.

This sequence belongs to the peptidase M13 family. Interacts with MEPE; the interaction is zinc-dependent (via ASARM motif). The cofactor is Zn(2+). In terms of processing, N-glycosylated. As to expression, expressed in bone, specifically in the osteoid and in osteocytes. Expressed in teeth, specifically in odontoblasts and ameloblasts. Expressed moderately by macrophages in the liver and has minimal expression in brown adipose tissue. Also expressed in suprabasal layers of the skin.

Its subcellular location is the cell membrane. Peptidase that cleaves SIBLING (small integrin-binding ligand, N-linked glycoprotein)-derived ASARM peptides, thus regulating their biological activity. Cleaves ASARM peptides between Ser and Glu or Asp residues. Regulates osteogenic cell differentiation and bone mineralization through the cleavage of the MEPE-derived ASARM peptide. Promotes dentin mineralization and renal phosphate reabsorption by cleaving DMP1- and MEPE-derived ASARM peptides. Inhibits the cleavage of MEPE by CTSB/cathepsin B thus preventing MEPE degradation. The chain is Phosphate-regulating neutral endopeptidase PHEX (Phex) from Mus musculus (Mouse).